Reading from the N-terminus, the 213-residue chain is Membrane-spanning 4-domains subfamily A member 3 (213 aa).

At Met-1–Gln-26 the chain is on the cytoplasmic side. Residues Ala-27–Val-47 traverse the membrane as a helical segment. Over Cys-48–His-58 the chain is Extracellular. A helical membrane pass occupies residues Phe-59–Ser-79. Over Gly-80–Asn-97 the chain is Cytoplasmic. A helical transmembrane segment spans residues Ser-98 to Val-118. Residues His-119–Gly-148 are Extracellular-facing. Residues Leu-149 to Ala-169 form a helical membrane-spanning segment. The Cytoplasmic segment spans residues Met-170 to Glu-213. The segment at Ser-189 to Glu-213 is disordered. Polar residues predominate over residues Ser-201–Glu-213.

This sequence belongs to the MS4A family. In terms of assembly, interacts with CDKN3. Interacts with CDKN3-CDK2 complexes through its binding to CDKN3; this interaction facilitates dissociation of cyclin A from CDKN3-CDK2 complexes. In terms of tissue distribution, expressed at low levels only in specific immune tissues, such as, spleen, bone marrow and peripheral blood leukocytes.

The protein localises to the membrane. In terms of biological role, hematopoietic modulator for the G1-S cell cycle transition. Modulates the level of phosphorylation of cyclin-dependent kinase 2 (CDK2) through its direct binding to cyclin-dependent kinase inhibitor 3 (CDKN3/KAP). In Mus musculus (Mouse), this protein is Membrane-spanning 4-domains subfamily A member 3 (Ms4a3).